The primary structure comprises 794 residues: Zinc finger protein 148 (794 aa).

A Glycyl lysine isopeptide (Lys-Gly) (interchain with G-Cter in SUMO2) cross-link involves residue lysine 6. Serine 51 bears the Phosphoserine mark. Residues lysine 88, lysine 115, and lysine 132 each participate in a glycyl lysine isopeptide (Lys-Gly) (interchain with G-Cter in SUMO2) cross-link. The C2H2-type 1 zinc-finger motif lies at 171–193 (HVCEHCNAAFRTNYHLQRHVFIH). A Phosphothreonine modification is found at threonine 194. C2H2-type zinc fingers lie at residues 199-221 (FQCSQCDMRFIQKYLLQRHEKIH) and 227-249 (FRCDECGMRFIQKYHMERHKRTH). The residue at position 250 (serine 250) is a Phosphoserine. A C2H2-type 4 zinc finger spans residues 255-278 (YQCEYCLQYFSRTDRVLKHKRMCH). Lysine 291 is covalently cross-linked (Glycyl lysine isopeptide (Lys-Gly) (interchain with G-Cter in SUMO2)). Positions 298 to 346 (EEDSGFSTSPKDNSLPKKKRQKPEKKSSGMDKESVLDKSDTKKDRNDYL) are disordered. Serine 301 and serine 306 each carry phosphoserine. A Glycyl lysine isopeptide (Lys-Gly) (interchain with G-Cter in SUMO2) cross-link involves residue lysine 308. The segment covering 321-344 (EKKSSGMDKESVLDKSDTKKDRND) has biased composition (basic and acidic residues). Residue lysine 356 forms a Glycyl lysine isopeptide (Lys-Gly) (interchain with G-Cter in SUMO1); alternate linkage. Lysine 356 is covalently cross-linked (Glycyl lysine isopeptide (Lys-Gly) (interchain with G-Cter in SUMO2); alternate). A Glycyl lysine isopeptide (Lys-Gly) (interchain with G-Cter in SUMO2) cross-link involves residue lysine 402. Serine 412 carries the phosphoserine modification. Residues lysine 421 and lysine 424 each participate in a glycyl lysine isopeptide (Lys-Gly) (interchain with G-Cter in SUMO2) cross-link. Over residues 574 to 588 (NSSDVPEVTQSENVG) the composition is skewed to polar residues. The interval 574 to 596 (NSSDVPEVTQSENVGSSSQASSS) is disordered. Lysine 607 carries the N6-acetyllysine modification. Phosphoserine is present on residues serine 665 and serine 784.

The protein belongs to the krueppel C2H2-type zinc-finger protein family. Interacts with HNRNPDL. Interacts with the 5FMC complex; the interaction requires association with CHTOP. Interacts with CAVIN1. In terms of processing, sumoylated with SUMO2. Desumoylated by SENP3, resulting in the stimulation of transcription of its target genes. As to expression, expressed in heart, lung, kidney, skeletal muscle, liver, brain and spleen.

The protein localises to the nucleus. Involved in transcriptional regulation. Represses the transcription of a number of genes including gastrin, stromelysin and enolase. Binds to the G-rich box in the enhancer region of these genes. This Rattus norvegicus (Rat) protein is Zinc finger protein 148 (Znf148).